Here is a 159-residue protein sequence, read N- to C-terminus: Short coiled-coil protein (159 aa).

Residues 78 to 146 (MMNADMDAVD…QYIENLMSAS (69 aa)) adopt a coiled-coil conformation.

It belongs to the SCOC family. Homodimer. Interacts with ARL1, ARL2 and ARL3. Directly interacts with FEZ1 and UVRAG. The interaction with UVRAG is reduced by amino acid starvation, but the complex is stabilized in the presence of FEZ1. Interacts with NRBF2. In terms of tissue distribution, widely expressed with highest levels in brain, heart and skeletal muscle.

Its subcellular location is the golgi apparatus membrane. The protein localises to the golgi apparatus. The protein resides in the trans-Golgi network. It is found in the cytoplasm. It localises to the cytosol. Positive regulator of amino acid starvation-induced autophagy. This is Short coiled-coil protein (SCOC) from Homo sapiens (Human).